Consider the following 292-residue polypeptide: Elongation factor Ts (292 aa).

The involved in Mg(2+) ion dislocation from EF-Tu stretch occupies residues T79–V82.

The protein belongs to the EF-Ts family.

The protein resides in the cytoplasm. In terms of biological role, associates with the EF-Tu.GDP complex and induces the exchange of GDP to GTP. It remains bound to the aminoacyl-tRNA.EF-Tu.GTP complex up to the GTP hydrolysis stage on the ribosome. This chain is Elongation factor Ts, found in Xanthomonas oryzae pv. oryzae (strain MAFF 311018).